Reading from the N-terminus, the 142-residue chain is Transcriptional regulator MraZ (142 aa).

SpoVT-AbrB domains are found at residues 5-46 (THPV…DRSE) and 75-118 (AAAQ…DSEA).

The protein belongs to the MraZ family. Forms oligomers.

It is found in the cytoplasm. The protein resides in the nucleoid. The chain is Transcriptional regulator MraZ from Tropheryma whipplei (strain TW08/27) (Whipple's bacillus).